The primary structure comprises 789 residues: GDH/6PGL endoplasmic bifunctional protein (789 aa).

A signal peptide spans 1–16; the sequence is MLLAAMCLALLGCLQA. Glutamine 17 is subject to Pyrrolidone carboxylic acid. Residues 17 to 524 form a hexose-6-phosphate dehydrogenase region; sequence QELKGHVSII…GGQLTFSQQQ (508 aa). NADP(+) contacts are provided by residues 29-36 and tyrosine 146; that span reads GATGDLAK. N-linked (GlcNAc...) asparagine glycosylation occurs at asparagine 154. Lysine 171 provides a ligand contact to NADP(+). Residues lysine 171, 201–205, glutamate 240, and aspartate 259 contribute to the D-glucose 6-phosphate site; that span reads HYLGK. Lysine 205 is subject to N6-succinyllysine. The Proton acceptor role is filled by histidine 264. Asparagine 279 carries N-linked (GlcNAc...) asparagine glycosylation. Lysine 357 and arginine 362 together coordinate D-glucose 6-phosphate. Position 367 (arginine 367) interacts with NADP(+). An N6-succinyllysine modification is found at lysine 424. The interval 525–538 is linker; the sequence is LEVLIPDLGSVPKP. The tract at residues 539-789 is 6-phosphogluconolactonase; that stretch reads SDFQVLGARY…WYMDYEAFLG (251 aa). Residue tryptophan 615 participates in NADP(+) binding. The N-linked (GlcNAc...) asparagine glycan is linked to asparagine 681.

It in the N-terminal section; belongs to the glucose-6-phosphate dehydrogenase family. The protein in the C-terminal section; belongs to the glucosamine/galactosamine-6-phosphate isomerase family. 6-phosphogluconolactonase subfamily. As to quaternary structure, homodimer. Expressed in liver (at protein level). Expressed in muscles. Expressed in adipose tissues.

Its subcellular location is the endoplasmic reticulum lumen. It carries out the reaction D-glucose 6-phosphate + NAD(+) = 6-phospho-D-glucono-1,5-lactone + NADH + H(+). The catalysed reaction is D-glucose 6-phosphate + NADP(+) = 6-phospho-D-glucono-1,5-lactone + NADPH + H(+). The enzyme catalyses 6-phospho-D-glucono-1,5-lactone + H2O = 6-phospho-D-gluconate + H(+). It catalyses the reaction 2-deoxy-D-glucose 6-phosphate + NAD(+) = 2-deoxy-6-phospho-D-glucono-1,5-lactone + NADH + H(+). It carries out the reaction 2-deoxy-D-glucose 6-phosphate + NADP(+) = 2-deoxy-6-phospho-D-glucono-1,5-lactone + NADPH + H(+). The catalysed reaction is D-galactose 6-phosphate + NADP(+) = 6-phospho-D-galactono-1,5-lactone + NADPH + H(+). The enzyme catalyses D-galactose 6-phosphate + NAD(+) = 6-phospho-D-galactono-1,5-lactone + NADH + H(+). It catalyses the reaction D-glucosamine 6-phosphate + NADP(+) = 2-amino-2-deoxy-6-phospho-D-glucono-1,5-lactone + NADPH + 2 H(+). It carries out the reaction D-glucose + NAD(+) = D-glucono-1,5-lactone + NADH + H(+). The catalysed reaction is D-glucose + NADP(+) = D-glucono-1,5-lactone + NADPH + H(+). The enzyme catalyses D-glucose 6-sulfate + NADP(+) = 6-sulfo-D-glucono-1,5-lactone + NADPH + H(+). It participates in carbohydrate degradation; pentose phosphate pathway; D-ribulose 5-phosphate from D-glucose 6-phosphate (oxidative stage). Its pathway is carbohydrate degradation; pentose phosphate pathway; D-ribulose 5-phosphate from D-glucose 6-phosphate (oxidative stage): step 2/3. Bifunctional enzyme localized in the lumen of the endoplasmic reticulum that catalyzes the first two steps of the oxidative branch of the pentose phosphate pathway/shunt, an alternative to glycolysis and a major source of reducing power and metabolic intermediates for biosynthetic processes. Has a hexose-6-phosphate dehydrogenase activity, with broad substrate specificity compared to glucose-6-phosphate 1-dehydrogenase/G6PD, and catalyzes the first step of the pentose phosphate pathway. In addition, acts as a 6-phosphogluconolactonase and catalyzes the second step of the pentose phosphate pathway. May have a dehydrogenase activity for alternative substrates including glucosamine 6-phosphate and glucose 6-sulfate. The main function of this enzyme is to provide reducing equivalents such as NADPH to maintain the adequate levels of reductive cofactors in the oxidizing environment of the endoplasmic reticulum. By producing NADPH that is needed by reductases of the lumen of the endoplasmic reticulum like corticosteroid 11-beta-dehydrogenase isozyme 1/HSD11B1, indirectly regulates their activity. The polypeptide is GDH/6PGL endoplasmic bifunctional protein (Mus musculus (Mouse)).